The sequence spans 370 residues: Protein rough sheath 2 (370 aa).

HTH myb-type domains lie at 1–53 (MKER…KNYL) and 54–108 (RPGI…EKQQ). 2 DNA-binding regions (H-T-H motif) span residues 27 to 53 (WHLV…KNYL) and 81 to 104 (WKKI…EVFK). The segment at 107-129 (QQRELRDSRRPPPEPSPDERGRY) is disordered. Positions 276–340 (KRVEQQLEME…QVKEEKMAEQ (65 aa)) form a coiled coil.

In terms of assembly, homodimer. Interacts with AS2, WRKY1, HIRA, a probable histone chaperone, and RIK, a predicted RNA binding protein. In terms of tissue distribution, expressed in lateral organ promordia.

The protein resides in the nucleus. Functionally, transcription factor required for normal cell differentiation. Interacts directly with asymmetric leaves 2 (AS2) to repress the knox homeobox genes. The protein is Protein rough sheath 2 (RS2) of Zea mays (Maize).